Consider the following 231-residue polypeptide: 2-C-methyl-D-erythritol 4-phosphate cytidylyltransferase (231 aa).

The protein belongs to the IspD/TarI cytidylyltransferase family. IspD subfamily.

The catalysed reaction is 2-C-methyl-D-erythritol 4-phosphate + CTP + H(+) = 4-CDP-2-C-methyl-D-erythritol + diphosphate. Its pathway is isoprenoid biosynthesis; isopentenyl diphosphate biosynthesis via DXP pathway; isopentenyl diphosphate from 1-deoxy-D-xylulose 5-phosphate: step 2/6. Its function is as follows. Catalyzes the formation of 4-diphosphocytidyl-2-C-methyl-D-erythritol from CTP and 2-C-methyl-D-erythritol 4-phosphate (MEP). The chain is 2-C-methyl-D-erythritol 4-phosphate cytidylyltransferase from Dictyoglomus thermophilum (strain ATCC 35947 / DSM 3960 / H-6-12).